We begin with the raw amino-acid sequence, 132 residues long: Small ribosomal subunit protein uS11 (132 aa).

Belongs to the universal ribosomal protein uS11 family. Part of the 30S ribosomal subunit.

Its function is as follows. Located on the platform of the 30S subunit. This Thermoplasma volcanium (strain ATCC 51530 / DSM 4299 / JCM 9571 / NBRC 15438 / GSS1) protein is Small ribosomal subunit protein uS11.